The following is a 295-amino-acid chain: 4-hydroxy-tetrahydrodipicolinate synthase (295 aa).

Pyruvate is bound at residue threonine 47. The active-site Proton donor/acceptor is the tyrosine 135. Lysine 163 functions as the Schiff-base intermediate with substrate in the catalytic mechanism. Isoleucine 206 provides a ligand contact to pyruvate.

It belongs to the DapA family. As to quaternary structure, homodimer.

The protein resides in the cytoplasm. It catalyses the reaction L-aspartate 4-semialdehyde + pyruvate = (2S,4S)-4-hydroxy-2,3,4,5-tetrahydrodipicolinate + H2O + H(+). It functions in the pathway amino-acid biosynthesis; L-lysine biosynthesis via DAP pathway; (S)-tetrahydrodipicolinate from L-aspartate: step 3/4. Catalyzes the condensation of (S)-aspartate-beta-semialdehyde [(S)-ASA] and pyruvate to 4-hydroxy-tetrahydrodipicolinate (HTPA). This Staphylococcus saprophyticus subsp. saprophyticus (strain ATCC 15305 / DSM 20229 / NCIMB 8711 / NCTC 7292 / S-41) protein is 4-hydroxy-tetrahydrodipicolinate synthase.